The primary structure comprises 265 residues: Homeobox protein CDX-1 (265 aa).

The segment at 9-152 (KDSPVYPGPA…GGGGVSGKTR (144 aa)) is disordered. A compositionally biased stretch (pro residues) spans 30-43 (YGPPAPPPAPPQYP). Residues 73–92 (AAAYGPGPAAPAASPASLAF) are compositionally biased toward low complexity. Positions 93–108 (GPPPDFSPVPAPPGPG) are enriched in pro residues. The span at 110-126 (GLLAQPLGGPGTPSSPG) shows a compositional bias: low complexity. The homeobox DNA-binding region spans 154-213 (KDKYRVVYTDHQRLELEKEFHYSRYITIRRKSELAANLGLTERQVKIWFQNRRAKERKVN). The interval 157–178 (YRVVYTDHQRLELEKEFHYSRY) is interaction with DNA. The interaction with 5-mCpG DNA stretch occupies residues 196–207 (RQVKIWFQNRRA). Over residues 206–217 (RAKERKVNKKKQ) the composition is skewed to basic residues. The tract at residues 206–265 (RAKERKVNKKKQQQQQPPQPPTAHDITATPARPSLGGLCPSNTSLLATSSPMPVKEEFLP) is disordered. Residues 245 to 256 (PSNTSLLATSSP) are compositionally biased toward polar residues.

The protein belongs to the Caudal homeobox family.

The protein localises to the nucleus. Plays a role in transcriptional regulation. Involved in activated KRAS-mediated transcriptional activation of PRKD1 in colorectal cancer (CRC) cells. Binds to the PRKD1 promoter in colorectal cancer (CRC) cells. Could play a role in the terminal differentiation of the intestine. Binds preferentially to methylated DNA. This Pongo pygmaeus (Bornean orangutan) protein is Homeobox protein CDX-1 (CDX1).